A 232-amino-acid polypeptide reads, in one-letter code: Large ribosomal subunit protein uL1 (232 aa).

It belongs to the universal ribosomal protein uL1 family. In terms of assembly, part of the 50S ribosomal subunit.

Binds directly to 23S rRNA. The L1 stalk is quite mobile in the ribosome, and is involved in E site tRNA release. Functionally, protein L1 is also a translational repressor protein, it controls the translation of the L11 operon by binding to its mRNA. The chain is Large ribosomal subunit protein uL1 from Alkaliphilus oremlandii (strain OhILAs) (Clostridium oremlandii (strain OhILAs)).